Here is a 408-residue protein sequence, read N- to C-terminus: Ribosomal RNA large subunit methyltransferase DR_0049 (408 aa).

Belongs to the methyltransferase superfamily.

The catalysed reaction is cytidine(2499) in 23S rRNA + S-adenosyl-L-methionine = 5-methylcytidine(2499) in 23S rRNA + S-adenosyl-L-homocysteine + H(+). Specifically methylates the cytosine at position 2499 (m5C2499) of 23S rRNA. The sequence is that of Ribosomal RNA large subunit methyltransferase DR_0049 from Deinococcus radiodurans (strain ATCC 13939 / DSM 20539 / JCM 16871 / CCUG 27074 / LMG 4051 / NBRC 15346 / NCIMB 9279 / VKM B-1422 / R1).